Here is a 196-residue protein sequence, read N- to C-terminus: Chorion protein S19 (196 aa).

Residues 1-16 (MNTFATLAIFISACLA) form the signal peptide.

Belongs to the chorion protein S19 family.

It localises to the secreted. In terms of biological role, chorion membrane (egg shell) protein; plays a role in protecting the egg from the environment. The sequence is that of Chorion protein S19 (Cp19) from Drosophila grimshawi (Hawaiian fruit fly).